A 318-amino-acid chain; its full sequence is NADH-ubiquinone oxidoreductase chain 1 (318 aa).

The next 8 helical transmembrane spans lie at 2 to 22 (FMIN…FLTL), 68 to 88 (ISMF…MWTP), 100 to 120 (LGIL…LWSG), 146 to 166 (LAII…PTLI), 171 to 191 (HIWL…STLA), 222 to 242 (LFFL…TILF), 253 to 273 (ELYT…FLWV), and 293 to 313 (FLPL…ITAG).

Belongs to the complex I subunit 1 family. As to quaternary structure, core subunit of respiratory chain NADH dehydrogenase (Complex I) which is composed of 45 different subunits.

It localises to the mitochondrion inner membrane. The enzyme catalyses a ubiquinone + NADH + 5 H(+)(in) = a ubiquinol + NAD(+) + 4 H(+)(out). In terms of biological role, core subunit of the mitochondrial membrane respiratory chain NADH dehydrogenase (Complex I) which catalyzes electron transfer from NADH through the respiratory chain, using ubiquinone as an electron acceptor. Essential for the catalytic activity and assembly of complex I. The sequence is that of NADH-ubiquinone oxidoreductase chain 1 (MT-ND1) from Hipposideros armiger terasensis (Formosan leaf-nosed bat).